A 388-amino-acid polypeptide reads, in one-letter code: MSHCKFEQPRHGSLGFLPRKRASRQRGKVKAFPKDDASKPVHLTAFLGYKAGMTHIVRDLDRPGSKMHKREILEAVTVIETPPMVVVGVVGYVETPRGLRSLTTVWAEHLSEEVKRRFYKNWFKSKKKAFTKYAKKYAESTQSINRELERIKKYCSVVRVLAHTQIRKTPLAQKKAHLMEIQVNGGSVADKVEWAREHFEKTVDIKSTFEQNEMIDVIGVTRGKGNEGTTARWGTKRLPRKTHRGLRKVACIGAWHPANVQWTVARAGNAGYMHRTQLNSKIYRIGAGDDAKNASTDFDATEKRITPMGGFVRYGVVENDFVMLNGATPGPVKRVLTLRKSLLTHTSRKALEPVSLKWIDTASKFGHGRFQTPAEAKQFLGTLKKDVA.

The segment covering 1–10 has biased composition (basic and acidic residues); sequence MSHCKFEQPR. The disordered stretch occupies residues 1 to 34; it reads MSHCKFEQPRHGSLGFLPRKRASRQRGKVKAFPK. Residue serine 13 is modified to Phosphoserine. Residues 18 to 31 are compositionally biased toward basic residues; the sequence is PRKRASRQRGKVKA. Serine 65, serine 140, serine 143, serine 207, serine 295, and serine 355 each carry phosphoserine. Phosphothreonine is present on threonine 372.

It belongs to the universal ribosomal protein uL3 family. Component of the large ribosomal subunit (LSU). Mature yeast ribosomes consist of a small (40S) and a large (60S) subunit. The 40S small subunit contains 1 molecule of ribosomal RNA (18S rRNA) and at least 33 different proteins. The large 60S subunit contains 3 rRNA molecules (25S, 5.8S and 5S rRNA) and at least 46 different proteins. uL3 forms together with ES39L one of the contact sites for the signal recognition particle that targets ribosomes to the endoplasmic reticulum membrane.

Its subcellular location is the cytoplasm. In terms of biological role, component of the ribosome, a large ribonucleoprotein complex responsible for the synthesis of proteins in the cell. The small ribosomal subunit (SSU) binds messenger RNAs (mRNAs) and translates the encoded message by selecting cognate aminoacyl-transfer RNA (tRNA) molecules. The large subunit (LSU) contains the ribosomal catalytic site termed the peptidyl transferase center (PTC), which catalyzes the formation of peptide bonds, thereby polymerizing the amino acids delivered by tRNAs into a polypeptide chain. The nascent polypeptides leave the ribosome through a tunnel in the LSU and interact with protein factors that function in enzymatic processing, targeting, and the membrane insertion of nascent chains at the exit of the ribosomal tunnel. uL3 plays a role in coordinating processes of accommodating the aminoacyl-tRNA in the PTC. This is Large ribosomal subunit protein uL3A (rpl301) from Schizosaccharomyces pombe (strain 972 / ATCC 24843) (Fission yeast).